The chain runs to 259 residues: Indole-diterpene biosynthesis cluster protein S (259 aa).

The next 5 membrane-spanning stretches (helical) occupy residues 5–25 (EASGWGFSLLQILLVLAGMVW), 64–84 (WFALHLFLYTTQLVGLSAIIL), 87–107 (VYLIRMLGLSTALPLISLWVL), 134–154 (VLWFTGLAHVASFLVATAASF), and 221–241 (LGAGLLARLFFVSLIAGPAAG).

It belongs to the ltmS family.

The protein resides in the membrane. In terms of biological role, part of the gene cluster that mediates the biosynthesis of paspalitrems, indole-diterpene (IDT) mycotoxins that are potent tremorgens in mammals. The geranylgeranyl diphosphate (GGPP) synthase idtG is proposed to catalyze the first step in IDT biosynthesis via catalysis of a series of iterative condensations of isopentenyl diphosphate (IPP) with dimethylallyl diphosphate (DMAPP), geranyl diphosphate (GPP), and farnesyl diphosphate (FPP), to form GGPP. Condensation of indole-3-glycerol phosphate with GGPP by the prenyltransferase idtC then forms 3-geranylgeranylindole (3-GGI). Epoxidation of the two terminal alkenes of the geranylgeranyl moiety by the FAD-dependent monooxygenase idtM, and cyclization by the terpene cyclase idtB then leads to the production of paspaline. The cytochrome P450 monooxygenase idtP then catalyzes oxidative elimination of the pendant methyl group at C-12 of paspaline and generates the C-10 ketone to yield 13-desoxypaxilline. The cytochrome P450 monooxygenase idtQ may catalyze the C-13 oxidation of 13-desoxypaxilline to afford paxilline. Considering that both paspalicine and paxilline were detected in C.paspali, idtQ also catalyzes the formation of paspalinine from 13-desoxypaxilline via paspalicine as an intermediate. Finally, the alpha-prenyltransferase idtF prenylates paspalinine at the C-20 or the C-21 positions to yield paspalitrems A and C, respectively. The hydroxylation of paspalitrem A at C-32 by a still unknown oxidase affords paspalitrem B. The polypeptide is Indole-diterpene biosynthesis cluster protein S (Claviceps paspali (Rye ergot fungus)).